The primary structure comprises 132 residues: Small ribosomal subunit protein uS11 (132 aa).

Positions 1 to 16 are enriched in basic residues; the sequence is MAAGMKGKRSRRRKER. A disordered region spans residues 1–20; sequence MAAGMKGKRSRRRKERKNVE.

This sequence belongs to the universal ribosomal protein uS11 family. As to quaternary structure, part of the 30S ribosomal subunit. Interacts with proteins S7 and S18. Binds to IF-3.

Its function is as follows. Located on the platform of the 30S subunit, it bridges several disparate RNA helices of the 16S rRNA. Forms part of the Shine-Dalgarno cleft in the 70S ribosome. This is Small ribosomal subunit protein uS11 from Clostridium botulinum (strain Loch Maree / Type A3).